A 317-amino-acid polypeptide reads, in one-letter code: Probable RuBisCO transcriptional regulator (317 aa).

The 58-residue stretch at 6-63 folds into the HTH lysR-type domain; the sequence is FTLDQLRILRAILIQGSFKKAATSLYISQPAVSSHVHNIEKQLNIQLFDRSHRNAQLT. Positions 23-42 form a DNA-binding region, H-T-H motif; the sequence is FKKAATSLYISQPAVSSHVH.

The protein belongs to the LysR transcriptional regulatory family.

Its subcellular location is the plastid. The protein localises to the chloroplast. Functionally, trans-acting transcriptional regulator of RuBisCO genes (rbcL and rbcS) expression. The sequence is that of Probable RuBisCO transcriptional regulator (rbcR) from Cyanidium caldarium (Red alga).